Here is a 160-residue protein sequence, read N- to C-terminus: 2-C-methyl-D-erythritol 2,4-cyclodiphosphate synthase (160 aa).

The a divalent metal cation site is built by Asp9 and His11. 4-CDP-2-C-methyl-D-erythritol 2-phosphate-binding positions include 9 to 11 (DVH) and 35 to 36 (HS). A divalent metal cation is bound at residue His43. 4-CDP-2-C-methyl-D-erythritol 2-phosphate contacts are provided by residues 57–59 (DIG), 62–66 (FPDND), and Phe140.

This sequence belongs to the IspF family. As to quaternary structure, homotrimer. The cofactor is a divalent metal cation.

The catalysed reaction is 4-CDP-2-C-methyl-D-erythritol 2-phosphate = 2-C-methyl-D-erythritol 2,4-cyclic diphosphate + CMP. Its pathway is isoprenoid biosynthesis; isopentenyl diphosphate biosynthesis via DXP pathway; isopentenyl diphosphate from 1-deoxy-D-xylulose 5-phosphate: step 4/6. Involved in the biosynthesis of isopentenyl diphosphate (IPP) and dimethylallyl diphosphate (DMAPP), two major building blocks of isoprenoid compounds. Catalyzes the conversion of 4-diphosphocytidyl-2-C-methyl-D-erythritol 2-phosphate (CDP-ME2P) to 2-C-methyl-D-erythritol 2,4-cyclodiphosphate (ME-CPP) with a corresponding release of cytidine 5-monophosphate (CMP). This chain is 2-C-methyl-D-erythritol 2,4-cyclodiphosphate synthase, found in Fusobacterium nucleatum subsp. nucleatum (strain ATCC 25586 / DSM 15643 / BCRC 10681 / CIP 101130 / JCM 8532 / KCTC 2640 / LMG 13131 / VPI 4355).